Reading from the N-terminus, the 606-residue chain is NADH-ubiquinone oxidoreductase chain 5 (606 aa).

The next 15 helical transmembrane spans lie at 3–23 (VINL…LPII), 38–58 (ITKT…LLFI), 87–107 (FFSL…MEFS), 124–144 (LLLF…LQLF), 180–200 (IGDM…NSWE), 216–236 (LLGL…HPWL), 244–264 (TPVS…FTLI), 276–296 (IQTS…ICAL), 304–323 (IIAL…IGIN), 328–350 (AFIH…GSII), 369–389 (MPIT…MPFL), 404–424 (MSYI…MTAS), 460–480 (LILG…PHTT), 483–503 (MTMP…GFTV), and 586–606 (LMKL…LIAL).

Belongs to the complex I subunit 5 family. As to quaternary structure, core subunit of respiratory chain NADH dehydrogenase (Complex I) which is composed of 45 different subunits.

The protein localises to the mitochondrion inner membrane. The catalysed reaction is a ubiquinone + NADH + 5 H(+)(in) = a ubiquinol + NAD(+) + 4 H(+)(out). In terms of biological role, core subunit of the mitochondrial membrane respiratory chain NADH dehydrogenase (Complex I) which catalyzes electron transfer from NADH through the respiratory chain, using ubiquinone as an electron acceptor. Essential for the catalytic activity and assembly of complex I. The sequence is that of NADH-ubiquinone oxidoreductase chain 5 (MT-ND5) from Loxodonta africana (African elephant).